We begin with the raw amino-acid sequence, 57 residues long: Large ribosomal subunit protein eL20 (57 aa).

A compositionally biased stretch (polar residues) spans Met1–Phe10. The disordered stretch occupies residues Met1–Lys21.

Belongs to the eukaryotic ribosomal protein eL20 family. Part of the 50S ribosomal subunit. Binds 23S rRNA.

The protein is Large ribosomal subunit protein eL20 of Halomicrobium mukohataei (strain ATCC 700874 / DSM 12286 / JCM 9738 / NCIMB 13541) (Haloarcula mukohataei).